Reading from the N-terminus, the 430-residue chain is mRNA cap guanine-N(7) methyltransferase (430 aa).

The segment at 1–88 (MALRPEKPVW…YDLEERKKKQ (88 aa)) is disordered. Residues 15 to 37 (QYDRQYGKLEEPKPPREESKPGD) are compositionally biased toward basic and acidic residues. The mRNA cap 0 methyltransferase domain maps to 136-419 (SPIIKLRNFN…FYTVFAFRKV (284 aa)). 145-146 (NN) serves as a coordination point for mRNA. Residues Lys149, Gly167, Asp189, Asp218, Gln244, and Tyr249 each coordinate S-adenosyl-L-methionine.

Belongs to the class I-like SAM-binding methyltransferase superfamily. mRNA cap 0 methyltransferase family.

It is found in the nucleus. It catalyses the reaction a 5'-end (5'-triphosphoguanosine)-ribonucleoside in mRNA + S-adenosyl-L-methionine = a 5'-end (N(7)-methyl 5'-triphosphoguanosine)-ribonucleoside in mRNA + S-adenosyl-L-homocysteine. Its function is as follows. Responsible for methylating the 5'-cap structure of mRNAs. This is mRNA cap guanine-N(7) methyltransferase (ABD1) from Eremothecium gossypii (strain ATCC 10895 / CBS 109.51 / FGSC 9923 / NRRL Y-1056) (Yeast).